Reading from the N-terminus, the 315-residue chain is 1,2-dihydroxy-3,5-cyclohexadiene-1,4-dicarboxylate dehydrogenase (315 aa).

A divalent metal cation-binding residues include H159, H203, and H255.

Belongs to the PdxA family.

It catalyses the reaction (3S,4R)-3,4-dihydroxycyclohexa-1,5-diene-1,4-dicarboxylate + NAD(+) = 3,4-dihydroxybenzoate + CO2 + NADH. Involved in the degradation of terephthalate (TPA) via the protocatechuate (PCA) 4,5-cleavage pathway. Catalyzes the dehydrogenation of 1,2-dihydroxy-3,5-cyclohexadiene-1,4-dicarboxylate (DCD) to yield protocatechuate (PCA). The polypeptide is 1,2-dihydroxy-3,5-cyclohexadiene-1,4-dicarboxylate dehydrogenase (tphBI) (Comamonas sp).